The primary structure comprises 326 residues: Vacuolar protein sorting-associated protein 26A-B (326 aa).

This sequence belongs to the VPS26 family. In terms of assembly, component of the heterotrimeric retromer cargo-selective complex (CSC) which is believed to associate with variable sorting nexins to form functionally distinct retromer complex variants.

The protein resides in the cytoplasm. The protein localises to the endosome membrane. It is found in the early endosome. Its function is as follows. Acts as a component of the retromer cargo-selective complex (CSC). The CSC is believed to be the core functional component of retromer or respective retromer complex variants acting to prevent missorting of selected transmembrane cargo proteins into the lysosomal degradation pathway. Retromer mediates retrograde transport of cargo proteins from endosomes to the trans-Golgi network (TGN). This is Vacuolar protein sorting-associated protein 26A-B (vps26a-b) from Xenopus laevis (African clawed frog).